A 94-amino-acid polypeptide reads, in one-letter code: Acylphosphatase (94 aa).

The region spanning 7-94 (AVQARVYGRV…TAPGDFRIVA (88 aa)) is the Acylphosphatase-like domain. Residues arginine 22 and asparagine 40 contribute to the active site.

This sequence belongs to the acylphosphatase family.

It carries out the reaction an acyl phosphate + H2O = a carboxylate + phosphate + H(+). The polypeptide is Acylphosphatase (acyP) (Mesorhizobium japonicum (strain LMG 29417 / CECT 9101 / MAFF 303099) (Mesorhizobium loti (strain MAFF 303099))).